The following is a 1141-amino-acid chain: Isoleucine--tRNA ligase (1141 aa).

The 'HIGH' region motif lies at 50 to 60 (PSANGMPGIHH). A 'KMSKS' region motif is present at residues 689–693 (KMSKR). Lys-692 serves as a coordination point for ATP.

The protein belongs to the class-I aminoacyl-tRNA synthetase family. IleS type 2 subfamily. As to quaternary structure, monomer. The cofactor is Zn(2+).

The protein resides in the cytoplasm. It catalyses the reaction tRNA(Ile) + L-isoleucine + ATP = L-isoleucyl-tRNA(Ile) + AMP + diphosphate. In terms of biological role, catalyzes the attachment of isoleucine to tRNA(Ile). As IleRS can inadvertently accommodate and process structurally similar amino acids such as valine, to avoid such errors it has two additional distinct tRNA(Ile)-dependent editing activities. One activity is designated as 'pretransfer' editing and involves the hydrolysis of activated Val-AMP. The other activity is designated 'posttransfer' editing and involves deacylation of mischarged Val-tRNA(Ile). The chain is Isoleucine--tRNA ligase from Bacteroides fragilis (strain YCH46).